A 429-amino-acid polypeptide reads, in one-letter code: Histidinol dehydrogenase (429 aa).

Y127, Q188, and N211 together coordinate NAD(+). The substrate site is built by S234, Q256, and H259. Zn(2+)-binding residues include Q256 and H259. Residues E324 and H325 each act as proton acceptor in the active site. Residues H325, D358, E412, and H417 each coordinate substrate. D358 is a binding site for Zn(2+). H417 lines the Zn(2+) pocket.

This sequence belongs to the histidinol dehydrogenase family. Zn(2+) serves as cofactor.

It catalyses the reaction L-histidinol + 2 NAD(+) + H2O = L-histidine + 2 NADH + 3 H(+). It functions in the pathway amino-acid biosynthesis; L-histidine biosynthesis; L-histidine from 5-phospho-alpha-D-ribose 1-diphosphate: step 9/9. Catalyzes the sequential NAD-dependent oxidations of L-histidinol to L-histidinaldehyde and then to L-histidine. In Bacillus anthracis, this protein is Histidinol dehydrogenase.